We begin with the raw amino-acid sequence, 1357 residues long: DNA-directed RNA polymerase subunit beta (1357 aa).

This sequence belongs to the RNA polymerase beta chain family. As to quaternary structure, the RNAP catalytic core consists of 2 alpha, 1 beta, 1 beta' and 1 omega subunit. When a sigma factor is associated with the core the holoenzyme is formed, which can initiate transcription.

It catalyses the reaction RNA(n) + a ribonucleoside 5'-triphosphate = RNA(n+1) + diphosphate. Its function is as follows. DNA-dependent RNA polymerase catalyzes the transcription of DNA into RNA using the four ribonucleoside triphosphates as substrates. The polypeptide is DNA-directed RNA polymerase subunit beta (Pseudomonas savastanoi pv. phaseolicola (strain 1448A / Race 6) (Pseudomonas syringae pv. phaseolicola (strain 1448A / Race 6))).